A 161-amino-acid chain; its full sequence is 3-hydroxyacyl-[acyl-carrier-protein] dehydratase FabZ (161 aa).

The active site involves histidine 66.

Belongs to the thioester dehydratase family. FabZ subfamily.

Its subcellular location is the cytoplasm. The enzyme catalyses a (3R)-hydroxyacyl-[ACP] = a (2E)-enoyl-[ACP] + H2O. Its function is as follows. Involved in unsaturated fatty acids biosynthesis. Catalyzes the dehydration of short chain beta-hydroxyacyl-ACPs and long chain saturated and unsaturated beta-hydroxyacyl-ACPs. This Gluconacetobacter diazotrophicus (strain ATCC 49037 / DSM 5601 / CCUG 37298 / CIP 103539 / LMG 7603 / PAl5) protein is 3-hydroxyacyl-[acyl-carrier-protein] dehydratase FabZ.